A 223-amino-acid polypeptide reads, in one-letter code: Small ribosomal subunit protein uS3 (223 aa).

The 69-residue stretch at 39 to 107 (VREFLHKKLA…PVQINIEEVR (69 aa)) folds into the KH type-2 domain.

It belongs to the universal ribosomal protein uS3 family. As to quaternary structure, part of the 30S ribosomal subunit. Forms a tight complex with proteins S10 and S14.

Binds the lower part of the 30S subunit head. Binds mRNA in the 70S ribosome, positioning it for translation. This is Small ribosomal subunit protein uS3 from Francisella tularensis subsp. holarctica (strain FTNF002-00 / FTA).